A 267-amino-acid chain; its full sequence is Tryptophan synthase alpha chain (267 aa).

Active-site proton acceptor residues include Glu49 and Asp60.

The protein belongs to the TrpA family. Tetramer of two alpha and two beta chains.

It carries out the reaction (1S,2R)-1-C-(indol-3-yl)glycerol 3-phosphate + L-serine = D-glyceraldehyde 3-phosphate + L-tryptophan + H2O. Its pathway is amino-acid biosynthesis; L-tryptophan biosynthesis; L-tryptophan from chorismate: step 5/5. Its function is as follows. The alpha subunit is responsible for the aldol cleavage of indoleglycerol phosphate to indole and glyceraldehyde 3-phosphate. The sequence is that of Tryptophan synthase alpha chain from Acaryochloris marina (strain MBIC 11017).